A 344-amino-acid polypeptide reads, in one-letter code: tRNA N6-adenosine threonylcarbamoyltransferase (344 aa).

Fe cation-binding residues include His112 and His116. Residues 134-138 (LASGG), Asp167, Gly180, and Asn280 contribute to the substrate site. Asp308 serves as a coordination point for Fe cation.

It belongs to the KAE1 / TsaD family. Fe(2+) serves as cofactor.

It is found in the cytoplasm. It carries out the reaction L-threonylcarbamoyladenylate + adenosine(37) in tRNA = N(6)-L-threonylcarbamoyladenosine(37) in tRNA + AMP + H(+). Functionally, required for the formation of a threonylcarbamoyl group on adenosine at position 37 (t(6)A37) in tRNAs that read codons beginning with adenine. Is involved in the transfer of the threonylcarbamoyl moiety of threonylcarbamoyl-AMP (TC-AMP) to the N6 group of A37, together with TsaE and TsaB. TsaD likely plays a direct catalytic role in this reaction. The sequence is that of tRNA N6-adenosine threonylcarbamoyltransferase from Rickettsia rickettsii (strain Iowa).